The sequence spans 302 residues: Sulfate adenylyltransferase subunit 2 (302 aa).

Residues 280–302 are disordered; it reads RQGRAIDHDQSGSMELKKRQGYF.

This sequence belongs to the PAPS reductase family. CysD subfamily. Heterodimer composed of CysD, the smaller subunit, and CysN.

The enzyme catalyses sulfate + ATP + H(+) = adenosine 5'-phosphosulfate + diphosphate. The protein operates within sulfur metabolism; hydrogen sulfide biosynthesis; sulfite from sulfate: step 1/3. In terms of biological role, with CysN forms the ATP sulfurylase (ATPS) that catalyzes the adenylation of sulfate producing adenosine 5'-phosphosulfate (APS) and diphosphate, the first enzymatic step in sulfur assimilation pathway. APS synthesis involves the formation of a high-energy phosphoric-sulfuric acid anhydride bond driven by GTP hydrolysis by CysN coupled to ATP hydrolysis by CysD. The sequence is that of Sulfate adenylyltransferase subunit 2 from Vibrio atlanticus (strain LGP32) (Vibrio splendidus (strain Mel32)).